The sequence spans 218 residues: E3 ubiquitin-protein ligase MARCHF3 (218 aa).

An RING-CH-type zinc finger spans residues 63 to 123 (SPFNDRPMCR…ELCHFRFAVE (61 aa)). The Zn(2+) site is built by Cys71, Cys74, Cys87, Cys89, His97, Cys100, Cys113, and Cys116. A run of 2 helical transmembrane segments spans residues 145–165 (LFGDMVCFLFITPLATISGWL) and 180–200 (LEAVGLIALTVALFTIYLFWT).

Interacts with MARCHF2 and STX6.

It localises to the cytoplasmic vesicle membrane. Its subcellular location is the early endosome membrane. The catalysed reaction is S-ubiquitinyl-[E2 ubiquitin-conjugating enzyme]-L-cysteine + [acceptor protein]-L-lysine = [E2 ubiquitin-conjugating enzyme]-L-cysteine + N(6)-ubiquitinyl-[acceptor protein]-L-lysine.. Its pathway is protein modification; protein ubiquitination. E3 ubiquitin-protein ligase which may be involved in endosomal trafficking. E3 ubiquitin ligases accept ubiquitin from an E2 ubiquitin-conjugating enzyme in the form of a thioester and then directly transfer the ubiquitin to targeted substrates. This chain is E3 ubiquitin-protein ligase MARCHF3 (Marchf3), found in Mus musculus (Mouse).